A 652-amino-acid chain; its full sequence is Proline-rich receptor-like protein kinase PERK1 (652 aa).

Residues 1–137 are disordered; that stretch reads MSTAPSPGTT…PPSDSSDGLS (137 aa). Residues 1 to 139 are Extracellular-facing; sequence MSTAPSPGTT…SDSSDGLSTG (139 aa). Pro residues predominate over residues 8-19; the sequence is GTTPSPSPPSPP. 2 N-linked (GlcNAc...) asparagine glycosylation sites follow: N21 and N50. The segment covering 26–112 has biased composition (pro residues); that stretch reads TPPPAASSPP…PSPNQGPPNT (87 aa). Positions 113–137 are enriched in low complexity; it reads PSGSTPRTPSNTKPSPPSDSSDGLS. The chain crosses the membrane as a helical span at residues 140 to 160; it reads VVVGIAIGGVAILVILTLICL. At 161–652 the chain is on the cytoplasmic side; that stretch reads LCKKKRRRRH…TGQGYSGPSL (492 aa). Positions 169–251 are disordered; sequence RHDDEAAYYV…GGSDYSDLPV (83 aa). Residues 203 to 213 show a composition bias toward polar residues; sequence NASRPSDNHVV. The span at 216 to 236 shows a compositional bias: pro residues; the sequence is LPPPKPPSPPRKPPPPPPPPA. Residue T269 is modified to Phosphothreonine. One can recognise a Protein kinase domain in the interval 280–559; it reads FSEANLLGQG…VRALEGNVSL (280 aa). Residues 286 to 294 and K308 each bind ATP; that span reads LGQGGFGYV. Phosphotyrosine is present on Y353. Residue D404 is the Proton acceptor of the active site. Residues S408 and S437 each carry the phosphoserine modification. Phosphothreonine is present on residues T438 and T443. The residue at position 451 (Y451) is a Phosphotyrosine. Over residues 605–616 the composition is skewed to polar residues; that stretch reads YGTTGEYSNPTS. The segment at 605 to 652 is disordered; it reads YGTTGEYSNPTSDYGLYPSGSSSEGQATREMEMGKIKKTGQGYSGPSL.

It belongs to the protein kinase superfamily. Ser/Thr protein kinase family. Mostly expressed in inflorescence bolt, flower buds and siliques, and, to a lower extent, in roots, seedlings and leaves.

The protein localises to the cell membrane. The catalysed reaction is L-seryl-[protein] + ATP = O-phospho-L-seryl-[protein] + ADP + H(+). It carries out the reaction L-threonyl-[protein] + ATP = O-phospho-L-threonyl-[protein] + ADP + H(+). This chain is Proline-rich receptor-like protein kinase PERK1 (PERK1), found in Arabidopsis thaliana (Mouse-ear cress).